Here is a 500-residue protein sequence, read N- to C-terminus: Glucose-6-phosphate isomerase (500 aa).

Glutamate 332 serves as the catalytic Proton donor. Residues histidine 363 and lysine 473 contribute to the active site.

The protein belongs to the GPI family.

The protein localises to the cytoplasm. It carries out the reaction alpha-D-glucose 6-phosphate = beta-D-fructose 6-phosphate. Its pathway is carbohydrate biosynthesis; gluconeogenesis. The protein operates within carbohydrate degradation; glycolysis; D-glyceraldehyde 3-phosphate and glycerone phosphate from D-glucose: step 2/4. Catalyzes the reversible isomerization of glucose-6-phosphate to fructose-6-phosphate. The polypeptide is Glucose-6-phosphate isomerase (Rhizorhabdus wittichii (strain DSM 6014 / CCUG 31198 / JCM 15750 / NBRC 105917 / EY 4224 / RW1) (Sphingomonas wittichii)).